The primary structure comprises 243 residues: Tetraspanin-36 (243 aa).

Topologically, residues 1 to 9 are cytoplasmic; that stretch reads MDCGIITSK. The helical transmembrane segment at 10–30 threads the bilayer; it reads TILLLLSLIFWAAGAALAYVG. Topologically, residues 31 to 49 are lumenal; the sequence is SYVIKSYNNFEDFMSDRHT. Residues 50 to 70 traverse the membrane as a helical segment; sequence LIPAAIIIGVAVVMFIIGFVG. Topologically, residues 71–84 are cytoplasmic; the sequence is CCATLRESKVGLGL. Residues 85–105 traverse the membrane as a helical segment; the sequence is FLIIIMLIFAAEVTAFVFGII. Topologically, residues 106–208 are lumenal; sequence YRGRIRGDLE…QVLQDVLSYA (103 aa). Residues asparagine 149, asparagine 163, and asparagine 174 are each glycosylated (N-linked (GlcNAc...) asparagine). The chain crosses the membrane as a helical span at residues 209-229; it reads MLVILGFAIIKFFGMLSVCVI. Over 230–243 the chain is Cytoplasmic; it reads TCKSKKNEYQPLYA.

Belongs to the tetraspanin (TM4SF) family. In terms of processing, N-glycosylated. As to expression, strongly expressed in melanophores and xanthophores. Also detected in eye, brain, heart, skin, fin, testis and ovary.

It is found in the golgi apparatus membrane. It localises to the endoplasmic reticulum membrane. Plays a role in migration and segregation of pigment cells (melanophores and xanthophores). Contributes to pigment stripe patterning in the epidermis. The protein is Tetraspanin-36 of Danio rerio (Zebrafish).